We begin with the raw amino-acid sequence, 505 residues long: uncharacterized protein (505 aa).

Transmembrane regions (helical) follow at residues 9–29 (ANLT…PFIV), 49–69 (YFSV…SVAA), 86–106 (AASV…AFFI), 122–142 (LSIL…GFGA), 156–176 (IQAV…ACFA), 181–201 (QIQL…FYFF), 235–255 (IGVL…LGAS), 261–281 (AAII…ASLF), 310–330 (LLLA…LTIW), 341–361 (LLFI…LFYI), 371–391 (PAIV…TLSG), 395–415 (LGLY…NAIF), 435–455 (IIGP…IQFI), and 464–484 (LIAT…MLVC).

It is found in the cell membrane. Functionally, may be involved in the production of the exopolysaccharide (EPS) component of the extracellular matrix during biofilm formation. EPS is responsible for the adhesion of chains of cells into bundles. This is an uncharacterized protein from Bacillus subtilis (strain 168).